The following is a 356-amino-acid chain: tRNA N6-adenosine threonylcarbamoyltransferase (356 aa).

The Fe cation site is built by His-115 and His-119. Residues 138-142 (LVSGG), Asp-171, Gly-184, and Asn-277 contribute to the substrate site. Residue Asp-305 participates in Fe cation binding.

Belongs to the KAE1 / TsaD family. Fe(2+) is required as a cofactor.

It localises to the cytoplasm. It catalyses the reaction L-threonylcarbamoyladenylate + adenosine(37) in tRNA = N(6)-L-threonylcarbamoyladenosine(37) in tRNA + AMP + H(+). Functionally, required for the formation of a threonylcarbamoyl group on adenosine at position 37 (t(6)A37) in tRNAs that read codons beginning with adenine. Is involved in the transfer of the threonylcarbamoyl moiety of threonylcarbamoyl-AMP (TC-AMP) to the N6 group of A37, together with TsaE and TsaB. TsaD likely plays a direct catalytic role in this reaction. This chain is tRNA N6-adenosine threonylcarbamoyltransferase, found in Polaromonas naphthalenivorans (strain CJ2).